The primary structure comprises 321 residues: Glucokinase (321 aa).

Position 8-13 (8-13 (GDVGGT)) interacts with ATP.

Belongs to the bacterial glucokinase family.

It is found in the cytoplasm. The enzyme catalyses D-glucose + ATP = D-glucose 6-phosphate + ADP + H(+). In Cronobacter sakazakii (strain ATCC BAA-894) (Enterobacter sakazakii), this protein is Glucokinase.